Here is a 417-residue protein sequence, read N- to C-terminus: Tyrosine--tRNA ligase (417 aa).

Residue Y35 coordinates L-tyrosine. Residues 40-49 carry the 'HIGH' region motif; the sequence is ATAGSLTVGH. Residues Y165 and Q169 each contribute to the L-tyrosine site. Residues 229-233 carry the 'KMSKS' region motif; sequence KFGKS. K232 contributes to the ATP binding site. Positions 350-416 constitute an S4 RNA-binding domain; the sequence is ISLLEALVFT…GKRFNALIIF (67 aa).

The protein belongs to the class-I aminoacyl-tRNA synthetase family. TyrS type 1 subfamily. In terms of assembly, homodimer.

It localises to the cytoplasm. It catalyses the reaction tRNA(Tyr) + L-tyrosine + ATP = L-tyrosyl-tRNA(Tyr) + AMP + diphosphate + H(+). Functionally, catalyzes the attachment of tyrosine to tRNA(Tyr) in a two-step reaction: tyrosine is first activated by ATP to form Tyr-AMP and then transferred to the acceptor end of tRNA(Tyr). The chain is Tyrosine--tRNA ligase from Phytoplasma mali (strain AT).